Consider the following 325-residue polypeptide: Putative gluconeogenesis factor (325 aa).

The protein belongs to the gluconeogenesis factor family.

The protein localises to the cytoplasm. Required for morphogenesis under gluconeogenic growth conditions. The sequence is that of Putative gluconeogenesis factor from Streptococcus pneumoniae serotype 4 (strain ATCC BAA-334 / TIGR4).